Here is a 188-residue protein sequence, read N- to C-terminus: Photosystem I assembly protein Ycf4 (188 aa).

2 helical membrane-spanning segments follow: residues 22-42 (LGWASVLLLGTSGFLLTGLSS) and 68-88 (LVMCFYGIAGLFLSTYLWCAI).

Belongs to the Ycf4 family.

It localises to the plastid. The protein localises to the chloroplast thylakoid membrane. Seems to be required for the assembly of the photosystem I complex. This Zygnema circumcarinatum (Green alga) protein is Photosystem I assembly protein Ycf4.